The sequence spans 477 residues: PTS system glucose-specific EIICB component (477 aa).

In terms of domain architecture, PTS EIIC type-1 spans 1–388 (MFKNVFSSLQ…FNLKTPGREE (388 aa)). A run of 9 helical transmembrane segments spans residues 20 to 40 (VSVL…FTLI), 51 to 71 (TGGS…ALGF), 76 to 96 (GVAA…LSAV), 112 to 132 (NFSD…AYMF), 152 to 172 (FVPI…SLIW), 250 to 270 (LSGG…AIWH), 280 to 300 (IGSI…TEPI), 304 to 324 (FILV…LSFP), and 354 to 374 (IFLF…IFYF). One can recognise a PTS EIIB type-1 domain in the interval 399-477 (IEIAPYIVEA…TAIDEYINNI (79 aa)). The Phosphocysteine intermediate; for EIIB activity role is filled by cysteine 421. Cysteine 421 carries the phosphocysteine modification.

The protein localises to the cell inner membrane. The catalysed reaction is N(pros)-phospho-L-histidyl-[protein] + D-glucose(out) = D-glucose 6-phosphate(in) + L-histidyl-[protein]. Functionally, the phosphoenolpyruvate-dependent sugar phosphotransferase system (sugar PTS), a major carbohydrate active transport system, catalyzes the phosphorylation of incoming sugar substrates concomitantly with their translocation across the cell membrane. The enzyme II complex composed of PtsG and Crr is involved in glucose transport. This chain is PTS system glucose-specific EIICB component (ptsG), found in Buchnera aphidicola subsp. Schizaphis graminum (strain Sg).